Here is a 144-residue protein sequence, read N- to C-terminus: Large ribosomal subunit protein uL15 (144 aa).

The segment at 1–48 is disordered; that stretch reads MIKLEYLQDPSPRKRRTKLLGRGPSSGHGKTSGRGHKGDGSRSGYKRR.

It belongs to the universal ribosomal protein uL15 family. In terms of assembly, part of the 50S ribosomal subunit.

Its function is as follows. Binds to the 23S rRNA. The protein is Large ribosomal subunit protein uL15 of Chlamydia muridarum (strain MoPn / Nigg).